The primary structure comprises 202 residues: Thymidylate kinase (202 aa).

7-14 (GIDGSGKT) provides a ligand contact to ATP.

It belongs to the thymidylate kinase family.

It catalyses the reaction dTMP + ATP = dTDP + ADP. Phosphorylation of dTMP to form dTDP in both de novo and salvage pathways of dTTP synthesis. This is Thymidylate kinase from Ehrlichia ruminantium (strain Gardel).